The following is a 240-amino-acid chain: Proteasome subunit beta type-1 (240 aa).

At M1 the chain carries N-acetylmethionine. Residues 1-27 constitute a propeptide that is removed on maturation; it reads MLSTAAYRDPDRELVMGPQGSAGPVQM. S57 carries O-linked (GlcNAc) serine glycosylation. S61 and S67 each carry phosphoserine. A Phosphotyrosine modification is found at Y149. The residue at position 161 (S161) is a Phosphoserine. The residue at position 203 (K203) is an N6-acetyllysine. An O-linked (GlcNAc) serine glycan is attached at S208.

This sequence belongs to the peptidase T1B family. As to quaternary structure, the 26S proteasome consists of a 20S proteasome core and two 19S regulatory subunits. The 20S proteasome core is a barrel-shaped complex made of 28 subunits that are arranged in four stacked rings. The two outer rings are each formed by seven alpha subunits, and the two inner rings are formed by seven beta subunits. The proteolytic activity is exerted by three beta-subunits PSMB5, PSMB6 and PSMB7. Interacts with SERPINB2. Interacts with RFPL4A. In terms of tissue distribution, ubiquitous.

Its subcellular location is the cytoplasm. The protein localises to the nucleus. In terms of biological role, non-catalytic component of the 20S core proteasome complex involved in the proteolytic degradation of most intracellular proteins. This complex plays numerous essential roles within the cell by associating with different regulatory particles. Associated with two 19S regulatory particles, forms the 26S proteasome and thus participates in the ATP-dependent degradation of ubiquitinated proteins. The 26S proteasome plays a key role in the maintenance of protein homeostasis by removing misfolded or damaged proteins that could impair cellular functions, and by removing proteins whose functions are no longer required. Associated with the PA200 or PA28, the 20S proteasome mediates ubiquitin-independent protein degradation. This type of proteolysis is required in several pathways including spermatogenesis (20S-PA200 complex) or generation of a subset of MHC class I-presented antigenic peptides (20S-PA28 complex). This is Proteasome subunit beta type-1 (Psmb1) from Rattus norvegicus (Rat).